We begin with the raw amino-acid sequence, 963 residues long: Protein translocase subunit SecA (963 aa).

ATP-binding positions include Q87, 105-109 (GEGKT), and D512. 2 disordered regions span residues 868–909 (GPVM…EDFT) and 924–963 (QFVGGDGSSTPQQVVAGQKVGRNDPCPCGSGKKYKKCHGS). Acidic residues predominate over residues 874–886 (PDEEEDGDEDSVE). Residues C949, C951, C960, and H961 each coordinate Zn(2+).

Belongs to the SecA family. In terms of assembly, monomer and homodimer. Part of the essential Sec protein translocation apparatus which comprises SecA, SecYEG and auxiliary proteins SecDF. Other proteins may also be involved. Zn(2+) serves as cofactor.

The protein resides in the cell inner membrane. It is found in the cytoplasm. The enzyme catalyses ATP + H2O + cellular proteinSide 1 = ADP + phosphate + cellular proteinSide 2.. In terms of biological role, part of the Sec protein translocase complex. Interacts with the SecYEG preprotein conducting channel. Has a central role in coupling the hydrolysis of ATP to the transfer of proteins into and across the cell membrane, serving as an ATP-driven molecular motor driving the stepwise translocation of polypeptide chains across the membrane. This is Protein translocase subunit SecA from Solibacter usitatus (strain Ellin6076).